The chain runs to 448 residues: tRNA modification GTPase MnmE (448 aa).

Arg-24, Glu-81, and Lys-120 together coordinate (6S)-5-formyl-5,6,7,8-tetrahydrofolate. In terms of domain architecture, TrmE-type G spans 216–373 (GLNVVLVGAP…LKRTLLREAG (158 aa)). Asn-226 is a binding site for K(+). GTP is bound by residues 226–231 (NVGKSS), 245–251 (TDIAGTT), and 270–273 (DTAG). Mg(2+) is bound at residue Ser-230. Thr-245, Ile-247, and Thr-250 together coordinate K(+). Thr-251 contacts Mg(2+). Lys-448 lines the (6S)-5-formyl-5,6,7,8-tetrahydrofolate pocket.

It belongs to the TRAFAC class TrmE-Era-EngA-EngB-Septin-like GTPase superfamily. TrmE GTPase family. In terms of assembly, homodimer. Heterotetramer of two MnmE and two MnmG subunits. Requires K(+) as cofactor.

It is found in the cytoplasm. Its function is as follows. Exhibits a very high intrinsic GTPase hydrolysis rate. Involved in the addition of a carboxymethylaminomethyl (cmnm) group at the wobble position (U34) of certain tRNAs, forming tRNA-cmnm(5)s(2)U34. The chain is tRNA modification GTPase MnmE from Neisseria meningitidis serogroup B (strain ATCC BAA-335 / MC58).